The chain runs to 1121 residues: Phosphatidylinositol 4-kinase beta 1 (1121 aa).

Residues 1-143 (MPMGRFLSLV…SRIQEKCQIA (143 aa)) form the PIK helical domain. The span at 187-207 (PPTQKSLSFSPSPGTNVQDDG) shows a compositional bias: polar residues. Positions 187-210 (PPTQKSLSFSPSPGTNVQDDGSQL) are disordered. 9 repeat units span residues 212-231 (AEDN…RDAL), 244-263 (SEKE…EGDE), 266-285 (PNSE…EDED), 288-306 (NSSE…ESEE), 309-328 (SSSD…DEEE), 331-350 (ANSD…EDEE), 353-372 (PNSE…EDDK), 380-398 (EDKD…DDKR), and 420-438 (DERE…DDKK). The 11 X 20 AA approximate repeats (PPC) stretch occupies residues 212 to 508 (AEDNKIFKKL…FRDRDQSVED (297 aa)). Disordered regions lie at residues 343–421 (ESKN…EEDE), 435–489 (DDKK…ESSP), 506–544 (VEDS…NTAS), and 794–825 (AAAA…NGGM). Basic and acidic residues-rich tracts occupy residues 358 to 376 (FFKK…VPKE), 383 to 405 (DGFL…EKNE), 412 to 421 (ADKKSGEEDE), and 435 to 445 (DDKKDIVKVDD). Positions 446–455 (GNESEGDESP) are enriched in acidic residues. Phosphoserine occurs at positions 449 and 454. A run of 2 repeats spans residues 454 to 472 (SPEF…EDAK) and 489 to 508 (PGTE…SVED). Residues 466–475 (IHPEDAKPTS) show a composition bias toward basic and acidic residues. The span at 476-489 (ENENSSNGLVESSP) shows a compositional bias: polar residues. The region spanning 835–1106 (ELWEGKRDRI…LISSSLDAWR (272 aa)) is the PI3K/PI4K catalytic domain. The segment at 841-847 (RDRIRKA) is G-loop. The tract at residues 969 to 977 (QVKDRHNGN) is catalytic loop. The interval 988–1012 (HIDFGFMLSNSPGGVNFESAPFKLT) is activation loop.

It belongs to the PI3/PI4-kinase family. Type III PI4K subfamily. In terms of assembly, interacts with AHK2, CBL1 and RABA4D. As to expression, expressed constitutively in leaves, roots, flowers, and stems.

It is found in the cell membrane. The protein localises to the golgi apparatus. The protein resides in the trans-Golgi network. Its subcellular location is the cytoplasmic vesicle membrane. It catalyses the reaction a 1,2-diacyl-sn-glycero-3-phospho-(1D-myo-inositol) + ATP = a 1,2-diacyl-sn-glycero-3-phospho-(1D-myo-inositol 4-phosphate) + ADP + H(+). Its activity is regulated as follows. Stimulated by phosphatidylinositol 4-phosphate (PtdIns4P). Slightly repressed by phosphatidyl-choline (PtdCho), wortmannin and adenosine. Acts on phosphatidylinositol (PtdIns) in the first committed step in the production of the second messenger inositol-1,4,5-trisphosphate. Necessary for proper organization of the trans-Golgi network (TGN) and post-Golgi secretion in root hairs. Together with PI4KB2, required during polarized root hair expansion and pollen tube elongation. Functions redundantly with PI4KB2 upstream of the cold response phosphoinositide-dependent phospholipase C (PI-PLC) pathway. The chain is Phosphatidylinositol 4-kinase beta 1 from Arabidopsis thaliana (Mouse-ear cress).